A 517-amino-acid polypeptide reads, in one-letter code: Protein disulfide-isomerase A5 (517 aa).

The signal sequence occupies residues 1 to 21; it reads MARAWGLLLAIGVILPTWLSS. 4 cysteine pairs are disulfide-bonded: C83–C92, C180–C183, C303–C306, and C424–C427. Thioredoxin domains follow at residues 132 to 259, 268 to 382, and 376 to 504; these read FLKD…NPQP, PWAD…NPEA, and WMQN…TLRE. The Prevents secretion from ER motif lies at 514–517; it reads REDL.

This sequence belongs to the protein disulfide isomerase family.

The protein localises to the endoplasmic reticulum lumen. The catalysed reaction is Catalyzes the rearrangement of -S-S- bonds in proteins.. In Rattus norvegicus (Rat), this protein is Protein disulfide-isomerase A5 (Pdia5).